The primary structure comprises 1141 residues: DNA-directed RNA polymerase subunit beta (1141 aa).

Composition is skewed to acidic residues over residues 1063–1074 (EIEIKEDDDDVS) and 1096–1141 (GGNE…GDEE). A disordered region spans residues 1063–1141 (EIEIKEDDDD…VPDEAYGDEE (79 aa)).

It belongs to the RNA polymerase beta chain family. The RNAP catalytic core consists of 2 alpha, 1 beta, 1 beta' and 1 omega subunit. When a sigma factor is associated with the core the holoenzyme is formed, which can initiate transcription.

The enzyme catalyses RNA(n) + a ribonucleoside 5'-triphosphate = RNA(n+1) + diphosphate. Functionally, DNA-dependent RNA polymerase catalyzes the transcription of DNA into RNA using the four ribonucleoside triphosphates as substrates. The polypeptide is DNA-directed RNA polymerase subunit beta (Moorella thermoacetica (strain ATCC 39073 / JCM 9320)).